The primary structure comprises 289 residues: 4-hydroxy-tetrahydrodipicolinate synthase (289 aa).

A pyruvate-binding site is contributed by Thr-43. The active-site Proton donor/acceptor is Tyr-131. Lys-160 functions as the Schiff-base intermediate with substrate in the catalytic mechanism. Position 200 (Val-200) interacts with pyruvate.

It belongs to the DapA family. In terms of assembly, homotetramer; dimer of dimers.

The protein localises to the cytoplasm. The enzyme catalyses L-aspartate 4-semialdehyde + pyruvate = (2S,4S)-4-hydroxy-2,3,4,5-tetrahydrodipicolinate + H2O + H(+). It participates in amino-acid biosynthesis; L-lysine biosynthesis via DAP pathway; (S)-tetrahydrodipicolinate from L-aspartate: step 3/4. Catalyzes the condensation of (S)-aspartate-beta-semialdehyde [(S)-ASA] and pyruvate to 4-hydroxy-tetrahydrodipicolinate (HTPA). The polypeptide is 4-hydroxy-tetrahydrodipicolinate synthase (Methanococcus maripaludis (strain C7 / ATCC BAA-1331)).